Here is a 138-residue protein sequence, read N- to C-terminus: Basic phospholipase A2 PL-X' (138 aa).

A signal peptide spans 1–16 (MRTLWIMAVLLVGVEG). Cystine bridges form between Cys-42–Cys-131, Cys-44–Cys-60, Cys-59–Cys-111, Cys-65–Cys-138, Cys-66–Cys-104, Cys-73–Cys-97, and Cys-91–Cys-102. Residues Tyr-43, Gly-45, and Gly-47 each contribute to the Ca(2+) site. His-63 is a catalytic residue. Asp-64 contributes to the Ca(2+) binding site. Asp-105 is an active-site residue.

This sequence belongs to the phospholipase A2 family. Group II subfamily. D49 sub-subfamily. Ca(2+) serves as cofactor. As to expression, expressed by the venom gland.

Its subcellular location is the secreted. It carries out the reaction a 1,2-diacyl-sn-glycero-3-phosphocholine + H2O = a 1-acyl-sn-glycero-3-phosphocholine + a fatty acid + H(+). In terms of biological role, PLA2 catalyzes the calcium-dependent hydrolysis of the 2-acyl groups in 3-sn-phosphoglycerides. This chain is Basic phospholipase A2 PL-X', found in Protobothrops flavoviridis (Habu).